A 515-amino-acid polypeptide reads, in one-letter code: Elongation factor 1-alpha S (515 aa).

In terms of domain architecture, tr-type G spans 5 to 258 (KTHINLVVIG…DAMKPPKRPT (254 aa)). The interval 14-21 (GHVDAGKS) is G1. Position 14–21 (14–21 (GHVDAGKS)) interacts with GTP. An N6,N6-dimethyllysine modification is found at K55. Residues 70–74 (GITID) are G2. K79 is subject to N6,N6,N6-trimethyllysine. The segment at 91 to 94 (DAPG) is G3. Residues 91 to 95 (DAPGH) and 151 to 154 (NKMD) each bind GTP. The G4 stretch occupies residues 151-154 (NKMD). A disordered region spans residues 187 to 206 (KKDKGDKKKGDKKEKKDKKD). Positions 189 to 206 (DKGDKKKGDKKEKKDKKD) are enriched in basic and acidic residues. A G5 region spans residues 222 to 224 (SGW). At K289 the chain carries N6-methyllysine. Residue K334 is modified to N6,N6,N6-trimethyllysine. Positions 396–419 (KRGKQTHDVSDDTEWATKDDAEPR) are disordered. Basic and acidic residues predominate over residues 398-419 (GKQTHDVSDDTEWATKDDAEPR). K441 carries the N6,N6,N6-trimethyllysine modification.

Belongs to the TRAFAC class translation factor GTPase superfamily. Classic translation factor GTPase family. EF-Tu/EF-1A subfamily.

It is found in the cytoplasm. This protein promotes the GTP-dependent binding of aminoacyl-tRNA to the A-site of ribosomes during protein biosynthesis. This is Elongation factor 1-alpha S (TEF-S) from Porphyra purpurea (Red seaweed).